Reading from the N-terminus, the 722-residue chain is Solute carrier organic anion transporter family member 4C1 (722 aa).

The segment at 1–81 (MQGSKGIENP…PGSQLSELEE (81 aa)) is disordered. Residues 1–101 (MQGSKGIENP…QCLQRCNTPQ (101 aa)) are Cytoplasmic-facing. Serine 15 and serine 16 each carry phosphoserine. Threonine 19 carries the phosphothreonine modification. Serine 24, serine 26, and serine 28 each carry phosphoserine. A compositionally biased stretch (polar residues) spans 25–46 (ASPSQVEVSAVASRNQNGGSQP). The chain crosses the membrane as a helical span at residues 102-122 (GFLLHYCLLALTQGIVVNGLV). At 123–141 (NISISTIEKRYEMKSSLTG) the chain is on the extracellular side. The chain crosses the membrane as a helical span at residues 142–162 (LISSSYDISFCVLSLFVSFFG). Over 163–168 (ERGHKP) the chain is Cytoplasmic. A helical membrane pass occupies residues 169-193 (RWLAFASFMIGLGALVFSLPHFFSG). Residues 194–218 (RYELGSIFEDTCLTRNSTRCSSSTS) are Extracellular-facing. Residues 219 to 249 (LLSNYFYVFVLGQLLLGTGGTPLYTLGTAFI) form a helical membrane-spanning segment. The Cytoplasmic segment spans residues 250–269 (DDSVPTHKSSLYIGIGYSMS). Residues 270–290 (ILGPAIGYVLGGQLLTMYIDI) traverse the membrane as a helical segment. Topologically, residues 291-306 (AMGQSSDLTEDDPRWL) are extracellular. A helical membrane pass occupies residues 307 to 331 (GAWWIGFLLAWLFAWSLIMPFSCFP). The Cytoplasmic portion of the chain corresponds to 332–376 (KHLPGTAKIQAGKTSQTHQNNSTSFQHTDENFGKSIKDFPTAVKN). Residues 377-398 (LMRNTVFICLVLSTTSEALITT) traverse the membrane as a helical segment. The Extracellular portion of the chain corresponds to 399 to 418 (GFATFLPKFIENQFGLTSSF). The helical transmembrane segment at 419–442 (AATLGGAVLIPGAALGQILGGVLV) threads the bilayer. The Cytoplasmic portion of the chain corresponds to 443 to 446 (SKFK). The chain crosses the membrane as a helical span at residues 447-470 (MKCKNTMKFALCTSGVALVLSFVF). Residues 471–578 (IYAKCENEPF…RTRCSNLPIF (108 aa)) lie on the Extracellular side of the membrane. In terms of domain architecture, Kazal-like spans 494-549 (GNLTAPCNANCNCLRSYYYPLCGSDGIQYFSPCFAGCLNSVSNRKPKVYYNCSCIE). Disulfide bonds link cysteine 500–cysteine 530, cysteine 506–cysteine 526, and cysteine 515–cysteine 547. Residues 579 to 601 (LGIFFITVIFTFMAGTPITVSIL) traverse the membrane as a helical segment. Residues 602–610 (RCVNHRHRS) are Cytoplasmic-facing. The chain crosses the membrane as a helical span at residues 611-636 (LALGVQFMLLRLLGTIPGPIIFGVII). At 637-670 (DSTCVLWDVNECGIKGACWIYDNIKMAHMLVAIS) the chain is on the extracellular side. The helical transmembrane segment at 671–688 (VTCKVITIFFNGLAIVLY) threads the bilayer. The Cytoplasmic portion of the chain corresponds to 689–722 (KPPPPGTEVSFQSQNVIVSTISVEEDLDKAENEG).

The protein belongs to the organo anion transporter (TC 2.A.60) family. Strongly expressed in initial segment of epididymis and seminal vesicles.

The protein resides in the basolateral cell membrane. It carries out the reaction estrone 3-sulfate(out) = estrone 3-sulfate(in). The catalysed reaction is L-thyroxine(out) = L-thyroxine(in). It catalyses the reaction 3,3',5-triiodo-L-thyronine(out) = 3,3',5-triiodo-L-thyronine(in). The enzyme catalyses chenodeoxycholate(out) = chenodeoxycholate(in). It carries out the reaction glycocholate(out) = glycocholate(in). The catalysed reaction is L-homoarginine(in) = L-homoarginine(out). It catalyses the reaction L-arginine(in) = L-arginine(out). The enzyme catalyses N(omega),N(omega)-dimethyl-L-arginine(out) = N(omega),N(omega)-dimethyl-L-arginine(in). Mediates the transport of organic anions such as steroids (estrone 3-sulfate, chenodeoxycholate, glycocholate) and thyroid hormones (3,3',5-triiodo-L-thyronine (T3), L-thyroxine (T4)), in the kidney. Capable of transporting cAMP and pharmacological substances such as digoxin, ouabain and methotrexate. Transport is independent of sodium, chloride ion, and ATP. Transport activity is stimulated by an acidic extracellular environment due to increased substrate affinity to the transporter. The driving force for this transport activity is currently not known. The role of hydrogencarbonate (HCO3(-), bicarbonate) as the probable counteranion that exchanges for organic anions is still not well defined. Functions as an uptake transporter at the apical membrane, suggesting a role in renal reabsorption. Involved in the renal secretion of the uremic toxin ADMA (N(omega),N(omega)-dimethyl-L-arginine or asymmetrical dimethylarginine), which is associated to cardiovascular events and mortality, and the structurally related amino acids L-arginine and L-homoarginine (a cardioprotective biomarker). Can act bidirectionally, suggesting a dual protective role of this transport protein; exporting L-homoarginine after being synthesized in proximal tubule cells, and mediating uptake of ADMA from the blood into proximal tubule cells where it is degraded by the enzyme dimethylarginine dimethylaminohydrolase 1 (DDAH1). May be involved in sperm maturation by enabling directed movement of organic anions and compounds within or between cells. This ion-transporting process is important to maintain the strict epididymal homeostasis necessary for sperm maturation. May have a role in secretory functions since seminal vesicle epithelial cells are assumed to secrete proteins involved in decapacitation by modifying surface proteins to facilitate the acquisition of the ability to fertilize the egg. The protein is Solute carrier organic anion transporter family member 4C1 of Mus musculus (Mouse).